A 173-amino-acid chain; its full sequence is Disulfide bond formation protein B (173 aa).

Topologically, residues 1–11 (MNALQWSFRAQ) are cytoplasmic. The helical transmembrane segment at 12 to 28 (CLTGFLFCTGLLAYAIF) threads the bilayer. The Periplasmic portion of the chain corresponds to 29 to 46 (LQLHQGLEPCPLCIFQRI). Residues C38 and C41 are joined by a disulfide bond. A helical transmembrane segment spans residues 47–63 (AFAVLGILFLIAGLYNS). Topologically, residues 64-70 (SNVYTRK) are cytoplasmic. The chain crosses the membrane as a helical span at residues 71 to 88 (AYGLLIFLTAAIGTGIAG). Residues 89 to 145 (RHVWVQLMPHNTISSCGSPLSFLSETMGPFEVFRTVLTGTSDCGNIDWRFLGLSMPM) are Periplasmic-facing. Residues C104 and C131 are joined by a disulfide bond. The helical transmembrane segment at 146-164 (WSMFWFVALALLGLLVGFK) threads the bilayer. Over 165–173 (AERRKPLFS) the chain is Cytoplasmic.

The protein belongs to the DsbB family.

The protein localises to the cell inner membrane. Functionally, required for disulfide bond formation in some periplasmic proteins. Acts by oxidizing the DsbA protein. This is Disulfide bond formation protein B from Xylella fastidiosa (strain 9a5c).